The following is a 144-amino-acid chain: Transcriptional regulator MraZ (144 aa).

SpoVT-AbrB domains are found at residues 5–47 and 76–121; these read EYQY…PLDR and AHKT…SQER.

This sequence belongs to the MraZ family. As to quaternary structure, forms oligomers.

It is found in the cytoplasm. The protein resides in the nucleoid. The sequence is that of Transcriptional regulator MraZ from Thermus thermophilus (strain ATCC BAA-163 / DSM 7039 / HB27).